Reading from the N-terminus, the 270-residue chain is Putative phosphoenolpyruvate synthase regulatory protein (270 aa).

150–157 (GVSRCGKT) serves as a coordination point for ADP.

Belongs to the pyruvate, phosphate/water dikinase regulatory protein family. PSRP subfamily.

It carries out the reaction [pyruvate, water dikinase] + ADP = [pyruvate, water dikinase]-phosphate + AMP + H(+). The enzyme catalyses [pyruvate, water dikinase]-phosphate + phosphate + H(+) = [pyruvate, water dikinase] + diphosphate. Bifunctional serine/threonine kinase and phosphorylase involved in the regulation of the phosphoenolpyruvate synthase (PEPS) by catalyzing its phosphorylation/dephosphorylation. The sequence is that of Putative phosphoenolpyruvate synthase regulatory protein from Shewanella halifaxensis (strain HAW-EB4).